Reading from the N-terminus, the 369-residue chain is Type 2 DNA topoisomerase 6 subunit A (369 aa).

Positions 11 to 149 (QRDLLAREKL…FHMRPEEDGA (139 aa)) constitute a Topo IIA-type catalytic domain. The active-site O-(5'-phospho-DNA)-tyrosine intermediate is tyrosine 106. 2 residues coordinate Mg(2+): glutamate 202 and aspartate 254.

This sequence belongs to the TOP6A family. As to quaternary structure, homodimer. Heterotetramer of two Top6A and two Top6B chains. The cofactor is Mg(2+).

It catalyses the reaction ATP-dependent breakage, passage and rejoining of double-stranded DNA.. Functionally, relaxes both positive and negative superturns and exhibits a strong decatenase activity. This chain is Type 2 DNA topoisomerase 6 subunit A, found in Methanosarcina barkeri (strain Fusaro / DSM 804).